A 1027-amino-acid chain; its full sequence is C2 and GRAM domain-containing protein At5g50170 (1027 aa).

The region spanning 1 to 103 is the C2 1 domain; that stretch reads MRLYVYILQA…ENQTLLPTWF (103 aa). Residues 158–167 are compositionally biased toward basic and acidic residues; that stretch reads SPKDLISSRD. Disordered stretches follow at residues 158-177 and 201-223; these read SPKD…HDGK and LHDE…DQCS. Residues 168 to 177 are compositionally biased toward basic residues; it reads GKRRKHHDGK. Residues 206-223 show a composition bias toward polar residues; that stretch reads SVGQSVNSNYEDATDQCS. Positions 253–426 constitute a VASt 1 domain; it reads TGGVLVDQKY…LLAKTYKTLD (174 aa). The chain crosses the membrane as a helical span at residues 452–472; it reads FLYFWSSSVICAVLLSVYVVV. In terms of domain architecture, C2 2 spans 516–639; the sequence is TVHFVQARLH…TADELADLSV (124 aa). The GRAM domain occupies 693-756; sequence AFQKLFGLPH…LWEDIDDIQV (64 aa). The VASt 2 domain occupies 855–1018; the sequence is MMSKVYTCDL…VIFDLFQKES (164 aa).

The protein resides in the membrane. The chain is C2 and GRAM domain-containing protein At5g50170 from Arabidopsis thaliana (Mouse-ear cress).